The sequence spans 403 residues: GTPase Obg (403 aa).

An Obg domain is found at 1-159 (MKFIDESLIR…RDLLLELMLL (159 aa)). An OBG-type G domain is found at 160 to 333 (ADVGMLGFPN…LCRDIMDFII (174 aa)). Residues 166–173 (GFPNAGKS), 191–195 (FTTLV), 213–216 (DIPG), 283–286 (NKID), and 314–316 (SAA) contribute to the GTP site. Mg(2+) is bound by residues S173 and T193. Positions 364–403 (YQFDDDEDWDDDWTEEDDDEDWDDDWSEEDDEGIEFIYKP) are disordered. Acidic residues predominate over residues 365–397 (QFDDDEDWDDDWTEEDDDEDWDDDWSEEDDEGI).

The protein belongs to the TRAFAC class OBG-HflX-like GTPase superfamily. OBG GTPase family. As to quaternary structure, monomer. The cofactor is Mg(2+).

The protein localises to the cytoplasm. In terms of biological role, an essential GTPase which binds GTP, GDP and possibly (p)ppGpp with moderate affinity, with high nucleotide exchange rates and a fairly low GTP hydrolysis rate. Plays a role in control of the cell cycle, stress response, ribosome biogenesis and in those bacteria that undergo differentiation, in morphogenesis control. In Haemophilus influenzae (strain PittGG), this protein is GTPase Obg.